We begin with the raw amino-acid sequence, 203 residues long: Somatotropin (203 aa).

The signal sequence occupies residues 1–17 (MDRVVIVLSVLSVAASS). Residue Gln-18 is modified to Pyrrolidone carboxylic acid. His-35 contributes to the Zn(2+) binding site. A disulfide bridge connects residues Cys-68 and Cys-176. Glu-185 provides a ligand contact to Zn(2+). Cys-193 and Cys-201 form a disulfide bridge.

It belongs to the somatotropin/prolactin family.

The protein localises to the secreted. Its function is as follows. Growth hormone plays an important role in growth control and is involved in the regulation of several anabolic processes. Implicated as an osmoregulatory substance important for seawater adaptation. The protein is Somatotropin (gh) of Solea senegalensis (Senegalese sole).